The following is a 295-amino-acid chain: Protease HtpX (295 aa).

2 helical membrane-spanning segments follow: residues 4 to 24 and 42 to 62; these read ILLFLATNLAVVLIASITLSL and QLLVFCAVFGFAGSLFSLFIS. His147 provides a ligand contact to Zn(2+). Residue Glu148 is part of the active site. His151 is a Zn(2+) binding site. The next 2 membrane-spanning stretches (helical) occupy residues 158–178 and 199–219; these read VTLALVQGVVNTFVMFFARII and ITTIFAELVLGFLASAIVMWF. Glu224 is a binding site for Zn(2+).

It belongs to the peptidase M48B family. Zn(2+) is required as a cofactor.

It localises to the cell inner membrane. The sequence is that of Protease HtpX from Pseudomonas syringae pv. syringae (strain B728a).